The following is a 600-amino-acid chain: NADH-quinone oxidoreductase subunit C/D (600 aa).

The tract at residues 1–190 (MVNNMTDLTA…SPFELTKAKQ (190 aa)) is NADH dehydrogenase I subunit C. Residues 214 to 600 (DFMFLNLGPN…IDFVMSDVDR (387 aa)) form an NADH dehydrogenase I subunit D region.

It in the N-terminal section; belongs to the complex I 30 kDa subunit family. This sequence in the C-terminal section; belongs to the complex I 49 kDa subunit family. As to quaternary structure, NDH-1 is composed of 13 different subunits. Subunits NuoB, CD, E, F, and G constitute the peripheral sector of the complex.

Its subcellular location is the cell inner membrane. The enzyme catalyses a quinone + NADH + 5 H(+)(in) = a quinol + NAD(+) + 4 H(+)(out). NDH-1 shuttles electrons from NADH, via FMN and iron-sulfur (Fe-S) centers, to quinones in the respiratory chain. The immediate electron acceptor for the enzyme in this species is believed to be ubiquinone. Couples the redox reaction to proton translocation (for every two electrons transferred, four hydrogen ions are translocated across the cytoplasmic membrane), and thus conserves the redox energy in a proton gradient. In Shigella boydii serotype 18 (strain CDC 3083-94 / BS512), this protein is NADH-quinone oxidoreductase subunit C/D.